Here is a 94-residue protein sequence, read N- to C-terminus: Conotoxin Qc6.1 (94 aa).

The N-terminal stretch at 1 to 22 (MKLTCMMIVALLFLTAWTFVTA) is a signal peptide. Residues 23–62 (VDSKNELENRGGWGQAGGWGKLFPMARDEMKNSEVSKLDN) constitute a propeptide that is removed on maturation. Intrachain disulfides connect Cys-66–Cys-84, Cys-73–Cys-88, and Cys-83–Cys-92.

Belongs to the conotoxin O1 superfamily. As to expression, expressed by the venom duct.

The protein resides in the secreted. The protein is Conotoxin Qc6.1 of Conus quercinus (Oak cone).